We begin with the raw amino-acid sequence, 517 residues long: MSMNKGPTLLDGDLPEQENVLQRVLQLPVVSGTCECFQKTYNSTKEAHPLVASVCNAYEKGVQGASNLAAWSMEPVVRRLSTQFTAANELACRGLDHLEEKIPALQYPPEKIASELKGTISTRLRSARNSISVPIASTSDKVLGATLAGCELALGMAKETAEYAANTRVGRLASGGADLALGSIEKVVEFLLPPDKESAPSSGRQRTQKAPKAKPSLVRRVSTLANTLSRHTMQTTAWALKQGHSLAMWIPGVAPLSSLAQWGASAAMQVVSRRQSEVRVPWLHNLAASQDESHDDQTDTEGEETDDEEEEEESEAEENVLREVTALPNPRGLLGGVVHTVQNTLRNTISAVTWAPAAVLGTVGRILHLTPAQAVSSTKGRAMSLSDALKGVTDNVVDTVVHYVPLPRLSLMEPESEFRDIDNPSAEAERKGSGARPASPESTPRPGQPRGSLRSVRGLSAPSCPGLDDKTEASARPGFLAMPREKPARRVSDSFFRPSVMEPILGRAQYSQLRKKS.

At S81 the chain carries Phosphoserine. T85 carries the post-translational modification Phosphothreonine. Phosphoserine is present on residues S126, S130, S132, S137, and S174. The segment at 195 to 216 (DKESAPSSGRQRTQKAPKAKPS) is disordered. 3 positions are modified to phosphothreonine: T223, T298, and T300. The disordered stretch occupies residues 286-320 (LAASQDESHDDQTDTEGEETDDEEEEEESEAEENV). The required for interaction with CIDEC stretch occupies residues 290–321 (QDESHDDQTDTEGEETDDEEEEEESEAEENVL). The span at 298 to 318 (TDTEGEETDDEEEEEESEAEE) shows a compositional bias: acidic residues. Phosphoserine is present on residues S314, S384, S386, S410, S433, S439, S460, S492, and S494. Residues 425–490 (SAEAERKGSG…AMPREKPARR (66 aa)) form a disordered region.

This sequence belongs to the perilipin family. As to quaternary structure, interacts with ABHD5. Interacts with CIDEC. Interacts with AQP7. In terms of processing, major cAMP-dependent protein kinase-substrate in adipocytes, also dephosphorylated by PP1. When phosphorylated, may be maximally sensitive to HSL and when unphosphorylated, may play a role in the inhibition of lipolysis, by acting as a barrier in lipid droplet.

It localises to the endoplasmic reticulum. It is found in the lipid droplet. Modulator of adipocyte lipid metabolism. Coats lipid storage droplets to protect them from breakdown by hormone-sensitive lipase (HSL). Its absence may result in leanness. Plays a role in unilocular lipid droplet formation by activating CIDEC. Their interaction promotes lipid droplet enlargement and directional net neutral lipid transfer. May modulate lipolysis and triglyceride levels. This Mus musculus (Mouse) protein is Perilipin-1 (Plin1).